A 678-amino-acid polypeptide reads, in one-letter code: Protein hook (678 aa).

Residues 1 to 155 are interaction with microtubules; sequence MSTQNGMYYS…NIMRALQELE (155 aa). One can recognise a Calponin-homology (CH) domain in the interval 5–123; the sequence is NGMYYSLLEW…RLLQLVLGCA (119 aa). Coiled coils occupy residues 135-435 and 479-589; these read EIMC…LKCG and QTAL…AKEV.

It belongs to the hook family. In terms of assembly, homodimer. Interacts with microtubules via its N-terminus.

It is found in the cytoplasm. It localises to the cytoskeleton. Its subcellular location is the endosome. The protein resides in the synapse. In terms of biological role, involved in endocytic trafficking by stabilizing organelles of the endocytic pathway. Probably acts as a cytoskeletal linker protein required to tether endosome vesicles to the cytoskeleton. Involved in modulation of endocytosis at stages required for down-regulation of membrane proteins that control synapse size. Not involved in synaptic vesicle recycling. Required in R7 cells for boss endocytosis into multivesicular bodies (MVBs). Has a role in regulating adult longevity. This is Protein hook from Drosophila virilis (Fruit fly).